We begin with the raw amino-acid sequence, 174 residues long: Transcription antitermination protein NusB (174 aa).

The disordered stretch occupies residues 1–28; the sequence is MVEPKKPFMRKPPPKTGDKKPGDRKANR. Basic and acidic residues predominate over residues 16–25; it reads TGDKKPGDRK.

This sequence belongs to the NusB family.

Its function is as follows. Involved in transcription antitermination. Required for transcription of ribosomal RNA (rRNA) genes. Binds specifically to the boxA antiterminator sequence of the ribosomal RNA (rrn) operons. This chain is Transcription antitermination protein NusB, found in Rhodopseudomonas palustris (strain BisB5).